The primary structure comprises 264 residues: Sulfur carrier protein FdhD (264 aa).

The active-site Cysteine persulfide intermediate is the cysteine 107.

It belongs to the FdhD family.

The protein resides in the cytoplasm. Its function is as follows. Required for formate dehydrogenase (FDH) activity. Acts as a sulfur carrier protein that transfers sulfur from IscS to the molybdenum cofactor prior to its insertion into FDH. This is Sulfur carrier protein FdhD from Staphylococcus haemolyticus (strain JCSC1435).